Here is a 684-residue protein sequence, read N- to C-terminus: MFGFIHESIRQLVIRNYGEDTWTQVLERSGFESGKENIMNHYYSDTDTYVLVDSVSLVLKVTKDQVWEMYGGFLITYSMEIGWDELVRSMSPNLKGFLDNLDSLHYFIDHVVYKANLRGPSFRCEETPDGTLLLHYFTGRPGLYHIVKGVVKEVAKRVFDLDITLVVQGRTQRSVHMNNGERVEEHVVFLINNLSEPRRDSEGSEVSLLTSTNANFPTIVDDTLGISLDDFSKALPYHFVIDESCKLVQCGSELHNHIPNELLQPGTPILRIFEINRPQIPLDFENICNFINAVFVLQVKTSPLKKKHMDAMSQEELKQEMETLDEDATNELTQGHHLKLKGQMMLLASKKHIIYLCSPYVTSINELMQYGMRLTAMPLHDATRDLILLNQQRLSDVEVNLQLEANNEQLETMTRELELERQKTDSILKDMLPRRIAQQLLSGEHIEACEHEATVMFCDLPAFQQAIPQCSPKDIVNMLNEIFRKLDRIVVIRGVYKVETVSDSYMAVSGIPDYTPEHAENMCHVALGMMWEARSVIDPVSKTPFLLRIGIHSGTITAGVVGTVHPKYCLFGETVTLASQMESLGMAGKIQCSKWAYQKAMETGRFEFSPRGRIDVKQRGLTETYFLTRSLKKSIWEIIDHDRDINVNSIEGYEELETAIENAVTIKSALPRPDQRNSAACSIS.

His-105 is a binding site for heme. Residues Asp-396 to Leu-432 adopt a coiled-coil conformation. Positions Thr-454–Glu-582 constitute a Guanylate cyclase domain. Mg(2+) contacts are provided by Asp-459 and Asp-503.

Belongs to the adenylyl cyclase class-4/guanylyl cyclase family. As to quaternary structure, heterodimer; with other soluble guanylate cyclases. It depends on heme as a cofactor. Expressed in a small number of neurons, corresponding to URX, AQR and PQR neurons.

It is found in the cytoplasm. The enzyme catalyses GTP = 3',5'-cyclic GMP + diphosphate. Its activity is regulated as follows. May be regulated by molecular oxygen. Probably not activated by nitric oxide (NO). Functionally, synthesizes cyclic GMP (cGMP) from GTP. Influences aerotaxis responses, aggregation and bordering behaviors (gathering around the edge of a bacterial lawn) in combination with other soluble guanylate cyclases. The protein is Soluble guanylate cyclase gcy-32 (gcy-32) of Caenorhabditis elegans.